The following is a 245-amino-acid chain: Uridylate kinase (245 aa).

12-15 (KLSG) serves as a coordination point for ATP. The tract at residues 20–25 (GEKGVG) is involved in allosteric activation by GTP. G54 lines the UMP pocket. ATP is bound by residues G55 and R59. Residues D74 and 135–142 (VGSPYFST) contribute to the UMP site. 3 residues coordinate ATP: N163, Y169, and D172.

Belongs to the UMP kinase family. Homohexamer.

It localises to the cytoplasm. It catalyses the reaction UMP + ATP = UDP + ADP. The protein operates within pyrimidine metabolism; CTP biosynthesis via de novo pathway; UDP from UMP (UMPK route): step 1/1. Allosterically activated by GTP. Inhibited by UTP. Catalyzes the reversible phosphorylation of UMP to UDP. The sequence is that of Uridylate kinase from Streptococcus mutans serotype c (strain ATCC 700610 / UA159).